We begin with the raw amino-acid sequence, 250 residues long: 2,3-bisphosphoglycerate-dependent phosphoglycerate mutase (250 aa).

Substrate is bound by residues 10 to 17 (RHGESQWN), 23 to 24 (TG), Arg-62, 89 to 92 (ERHY), Lys-100, 116 to 117 (RR), and 185 to 186 (GN). Residue His-11 is the Tele-phosphohistidine intermediate of the active site. Glu-89 serves as the catalytic Proton donor/acceptor.

The protein belongs to the phosphoglycerate mutase family. BPG-dependent PGAM subfamily. Homodimer.

It carries out the reaction (2R)-2-phosphoglycerate = (2R)-3-phosphoglycerate. The protein operates within carbohydrate degradation; glycolysis; pyruvate from D-glyceraldehyde 3-phosphate: step 3/5. In terms of biological role, catalyzes the interconversion of 2-phosphoglycerate and 3-phosphoglycerate. This Salmonella dublin (strain CT_02021853) protein is 2,3-bisphosphoglycerate-dependent phosphoglycerate mutase.